Consider the following 407-residue polypeptide: UDP-N-acetylglucosamine--N-acetylmuramyl-(pentapeptide) pyrophosphoryl-undecaprenol N-acetylglucosamine transferase (407 aa).

Residues 1–21 are disordered; sequence MNNSVREPTRGRRGSPPVADA. Residues 38–40, Asn157, Ser228, and Gln324 contribute to the UDP-N-acetyl-alpha-D-glucosamine site; that span reads TAG.

It belongs to the glycosyltransferase 28 family. MurG subfamily.

It is found in the cell membrane. It carries out the reaction di-trans,octa-cis-undecaprenyl diphospho-N-acetyl-alpha-D-muramoyl-L-alanyl-D-glutamyl-meso-2,6-diaminopimeloyl-D-alanyl-D-alanine + UDP-N-acetyl-alpha-D-glucosamine = di-trans,octa-cis-undecaprenyl diphospho-[N-acetyl-alpha-D-glucosaminyl-(1-&gt;4)]-N-acetyl-alpha-D-muramoyl-L-alanyl-D-glutamyl-meso-2,6-diaminopimeloyl-D-alanyl-D-alanine + UDP + H(+). It functions in the pathway cell wall biogenesis; peptidoglycan biosynthesis. Functionally, cell wall formation. Catalyzes the transfer of a GlcNAc subunit on undecaprenyl-pyrophosphoryl-MurNAc-pentapeptide (lipid intermediate I) to form undecaprenyl-pyrophosphoryl-MurNAc-(pentapeptide)GlcNAc (lipid intermediate II). This is UDP-N-acetylglucosamine--N-acetylmuramyl-(pentapeptide) pyrophosphoryl-undecaprenol N-acetylglucosamine transferase from Mycobacterium leprae (strain TN).